Reading from the N-terminus, the 344-residue chain is Outer membrane protein A (344 aa).

Residues 1–14 (MKAIFVLNAAPKDN) lie on the Periplasmic side of the membrane. A beta stranded membrane pass occupies residues 15–24 (TWYAGGKLGW). At 25–49 (SQYHDTGFYGNGFQNNNGPTRNDQL) the chain is on the extracellular side. Residues 50–59 (GAGAFGGYQV) traverse the membrane as a beta stranded segment. Topologically, residues 60 to 62 (NPY) are periplasmic. A beta stranded transmembrane segment spans residues 63 to 71 (LGFEMGYDW). Residues 72 to 89 (LGRMAYKGSVDNGAFKAQ) lie on the Extracellular side of the membrane. A beta stranded transmembrane segment spans residues 90 to 100 (GVQLTAKLGYP). Topologically, residues 101 to 104 (ITDD) are periplasmic. The chain crosses the membrane as a beta stranded span at residues 105-114 (LDIYTRLGGM). Residues 115–139 (VWRADSKGNYASTGVSRSEHDTGVS) lie on the Extracellular side of the membrane. A beta stranded transmembrane segment spans residues 140–149 (PVFAGGVEWA). At 150–153 (VTRD) the chain is on the periplasmic side. A beta stranded membrane pass occupies residues 154–162 (IATRLEYQW). Topologically, residues 163–179 (VNNIGDAGTVGTRPDNG) are extracellular. A beta stranded membrane pass occupies residues 180–188 (MLSLGVSYR). At 189-344 (FGQEDAAPVV…YKEVVTQPQA (156 aa)) the chain is on the periplasmic side. Repeat copies occupy residues 199 to 200 (AP), 201 to 202 (AP), 203 to 204 (AP), and 205 to 206 (AP). The segment at 199 to 206 (APAPAPAP) is 4 X 2 AA tandem repeats of A-P. In terms of domain architecture, OmpA-like spans 208–336 (VATKHFTLKS…RVEIEVKGYK (129 aa)). Cysteine 309 and cysteine 321 are oxidised to a cystine.

The protein belongs to the outer membrane OOP (TC 1.B.6) superfamily. OmpA family. As to quaternary structure, monomer and homodimer.

Its subcellular location is the cell outer membrane. In terms of biological role, with TolR probably plays a role in maintaining the position of the peptidoglycan cell wall in the periplasm. Acts as a porin with low permeability that allows slow penetration of small solutes; an internal gate slows down solute passage. Functionally, required for conjugation with F-type plasmids; probably serves as the mating receptor on recipient cells. The polypeptide is Outer membrane protein A (Klebsiella pneumoniae).